A 369-amino-acid polypeptide reads, in one-letter code: Maltose/maltodextrin import ATP-binding protein MalK (369 aa).

In terms of domain architecture, ABC transporter spans 4–234 (VQLRNVTKAW…PADRFVAGFI (231 aa)). 36-43 (GPSGCGKS) contributes to the ATP binding site.

The protein belongs to the ABC transporter superfamily. Maltooligosaccharide importer (TC 3.A.1.1.1) family. In terms of assembly, the complex is composed of two ATP-binding proteins (MalK), two transmembrane proteins (MalG and MalK) and a solute-binding protein (MalE).

It is found in the cell inner membrane. The catalysed reaction is D-maltose(out) + ATP + H2O = D-maltose(in) + ADP + phosphate + H(+). Its function is as follows. Part of the ABC transporter complex MalEFGK involved in maltose/maltodextrin import. Responsible for energy coupling to the transport system. The polypeptide is Maltose/maltodextrin import ATP-binding protein MalK (Salmonella choleraesuis (strain SC-B67)).